The primary structure comprises 177 residues: Peptide methionine sulfoxide reductase MsrA 2 (177 aa).

Residue cysteine 12 is part of the active site.

Belongs to the MsrA Met sulfoxide reductase family.

The catalysed reaction is L-methionyl-[protein] + [thioredoxin]-disulfide + H2O = L-methionyl-(S)-S-oxide-[protein] + [thioredoxin]-dithiol. It catalyses the reaction [thioredoxin]-disulfide + L-methionine + H2O = L-methionine (S)-S-oxide + [thioredoxin]-dithiol. Its function is as follows. Has an important function as a repair enzyme for proteins that have been inactivated by oxidation. Catalyzes the reversible oxidation-reduction of methionine sulfoxide in proteins to methionine. This is Peptide methionine sulfoxide reductase MsrA 2 (msrA2) from Staphylococcus aureus (strain Mu50 / ATCC 700699).